A 182-amino-acid polypeptide reads, in one-letter code: Large ribosomal subunit protein uL5 (182 aa).

Belongs to the universal ribosomal protein uL5 family. Part of the 50S ribosomal subunit; part of the 5S rRNA/L5/L18/L25 subcomplex. Contacts the 5S rRNA and the P site tRNA. Forms a bridge to the 30S subunit in the 70S ribosome.

Its function is as follows. This is one of the proteins that bind and probably mediate the attachment of the 5S RNA into the large ribosomal subunit, where it forms part of the central protuberance. In the 70S ribosome it contacts protein S13 of the 30S subunit (bridge B1b), connecting the 2 subunits; this bridge is implicated in subunit movement. Contacts the P site tRNA; the 5S rRNA and some of its associated proteins might help stabilize positioning of ribosome-bound tRNAs. This is Large ribosomal subunit protein uL5 from Borreliella burgdorferi (strain ATCC 35210 / DSM 4680 / CIP 102532 / B31) (Borrelia burgdorferi).